Reading from the N-terminus, the 258-residue chain is Acyl-[acyl-carrier-protein]--UDP-N-acetylglucosamine O-acyltransferase (258 aa).

It belongs to the transferase hexapeptide repeat family. LpxA subfamily. Homotrimer.

It localises to the cytoplasm. It catalyses the reaction a (3R)-hydroxyacyl-[ACP] + UDP-N-acetyl-alpha-D-glucosamine = a UDP-3-O-[(3R)-3-hydroxyacyl]-N-acetyl-alpha-D-glucosamine + holo-[ACP]. It participates in glycolipid biosynthesis; lipid IV(A) biosynthesis; lipid IV(A) from (3R)-3-hydroxytetradecanoyl-[acyl-carrier-protein] and UDP-N-acetyl-alpha-D-glucosamine: step 1/6. Functionally, involved in the biosynthesis of lipid A, a phosphorylated glycolipid that anchors the lipopolysaccharide to the outer membrane of the cell. The chain is Acyl-[acyl-carrier-protein]--UDP-N-acetylglucosamine O-acyltransferase from Neisseria meningitidis serogroup A / serotype 4A (strain DSM 15465 / Z2491).